A 257-amino-acid chain; its full sequence is 5-oxoprolinase subunit A (257 aa).

It belongs to the LamB/PxpA family. As to quaternary structure, forms a complex composed of PxpA, PxpB and PxpC.

It carries out the reaction 5-oxo-L-proline + ATP + 2 H2O = L-glutamate + ADP + phosphate + H(+). Its function is as follows. Catalyzes the cleavage of 5-oxoproline to form L-glutamate coupled to the hydrolysis of ATP to ADP and inorganic phosphate. This is 5-oxoprolinase subunit A from Halalkalibacterium halodurans (strain ATCC BAA-125 / DSM 18197 / FERM 7344 / JCM 9153 / C-125) (Bacillus halodurans).